The chain runs to 126 residues: Glycine cleavage system H protein (126 aa).

The region spanning 22-104 is the Lipoyl-binding domain; that stretch reads VATIGITEYA…YEKAWMVKVE (83 aa). The residue at position 63 (K63) is an N6-lipoyllysine.

Belongs to the GcvH family. The glycine cleavage system is composed of four proteins: P, T, L and H. It depends on (R)-lipoate as a cofactor.

Its function is as follows. The glycine cleavage system catalyzes the degradation of glycine. The H protein shuttles the methylamine group of glycine from the P protein to the T protein. In terms of biological role, is also involved in protein lipoylation via its role as an octanoyl/lipoyl carrier protein intermediate. The chain is Glycine cleavage system H protein from Staphylococcus aureus (strain MSSA476).